Here is a 66-residue protein sequence, read N- to C-terminus: Photosystem II reaction center protein J (66 aa).

A helical membrane pass occupies residues 37–57; the sequence is LWLVATAGGMAVIFVVGLFFY.

This sequence belongs to the PsbJ family. As to quaternary structure, PSII is composed of 1 copy each of membrane proteins PsbA, PsbB, PsbC, PsbD, PsbE, PsbF, PsbH, PsbI, PsbJ, PsbK, PsbL, PsbM, PsbT, PsbX, PsbY, PsbZ, Psb30/Ycf12, peripheral proteins PsbO, CyanoQ (PsbQ), PsbU, PsbV and a large number of cofactors. It forms dimeric complexes.

The protein resides in the cellular thylakoid membrane. In terms of biological role, one of the components of the core complex of photosystem II (PSII). PSII is a light-driven water:plastoquinone oxidoreductase that uses light energy to abstract electrons from H(2)O, generating O(2) and a proton gradient subsequently used for ATP formation. It consists of a core antenna complex that captures photons, and an electron transfer chain that converts photonic excitation into a charge separation. This chain is Photosystem II reaction center protein J, found in Synechococcus sp. (strain CC9311).